The chain runs to 235 residues: Ribonuclease 3 (235 aa).

Positions 6–131 (IDQLERLTEH…LIAVMYLDGG (126 aa)) constitute an RNase III domain. Glu-44 contributes to the Mg(2+) binding site. Asp-48 is an active-site residue. Mg(2+) contacts are provided by Asp-117 and Glu-120. Glu-120 is a catalytic residue. A DRBM domain is found at 156-225 (DAKTELQEWA…AEKVLRREGI (70 aa)).

Belongs to the ribonuclease III family. In terms of assembly, homodimer. Mg(2+) serves as cofactor.

The protein resides in the cytoplasm. It catalyses the reaction Endonucleolytic cleavage to 5'-phosphomonoester.. Its function is as follows. Digests double-stranded RNA. Involved in the processing of primary rRNA transcript to yield the immediate precursors to the large and small rRNAs (23S and 16S). Processes some mRNAs, and tRNAs when they are encoded in the rRNA operon. Processes pre-crRNA and tracrRNA of type II CRISPR loci if present in the organism. The chain is Ribonuclease 3 from Bartonella quintana (strain Toulouse) (Rochalimaea quintana).